The sequence spans 216 residues: Invasion protein InvF (216 aa).

Residues tyrosine 112 to isoleucine 210 enclose the HTH araC/xylS-type domain. DNA-binding regions (H-T-H motif) lie at residues arginine 129–leucine 150 and isoleucine 177–isoleucine 200.

Its function is as follows. Transcriptional regulator required for the expression of several genes encoding type III secretion system SPI1 effector proteins. The interaction with SicA is necessary for the activation of sigDE (sopB pipC), sicAsipBCDA, and sopE. This chain is Invasion protein InvF (invF), found in Salmonella typhi.